The primary structure comprises 87 residues: Glutaredoxin (87 aa).

In terms of domain architecture, Glutaredoxin spans 1 to 87 (MFVVIFGRPG…LMKEQFGIVA (87 aa)). An intrachain disulfide couples cysteine 11 to cysteine 14.

The protein belongs to the glutaredoxin family. In terms of assembly, monomer.

It localises to the cytoplasm. Its function is as follows. Has a glutathione-disulfide oxidoreductase activity in the presence of NADPH and glutathione reductase. Reduces low molecular weight disulfides and proteins. The sequence is that of Glutaredoxin (grxA) from Haemophilus influenzae (strain ATCC 51907 / DSM 11121 / KW20 / Rd).